Here is a 78-residue protein sequence, read N- to C-terminus: Beta-defensin 12 (78 aa).

The signal sequence occupies residues 1–27; sequence MALSREVFYFGFALFFIVVELPSGSWA. 3 disulfide bridges follow: cysteine 46–cysteine 73, cysteine 53–cysteine 67, and cysteine 57–cysteine 74.

This sequence belongs to the beta-defensin family. As to expression, only expressed in epididymis (caput, corpus and cauda).

It localises to the secreted. Functionally, has antibacterial activity. This Mus musculus (Mouse) protein is Beta-defensin 12 (Defb12).